A 288-amino-acid chain; its full sequence is Rhox homeobox family member 2 (288 aa).

The interval 16–136 (SPAVDDEKEL…GLEPGNAQQP (121 aa)) is disordered. Residues 39-48 (VKEEEEDAQP) are compositionally biased toward acidic residues. A compositionally biased stretch (basic and acidic residues) spans 68-80 (GEEKDGGGEEKDG). A DNA-binding region (homeobox) is located at residues 134-193 (QQPNVHAFTPLQLQELERIFQREQFPSEFLRRRLARSMNVTELAVQIWFENRRAKWRRHQ). The Nuclear localization signal motif lies at 186 to 195 (RAKWRRHQRA).

The protein belongs to the paired-like homeobox family. PEPP subfamily. As to expression, testis. Not detected in epididymis nor placenta. In testis, mainly expressed in germ cells, but also detected in somatic cells such as Sertoli cells, Leydig cells and peritubular cells.

The protein resides in the nucleus. Functionally, transcription factor maybe involved in reproductive processes. Modulates expression of target genes encoding proteins involved in processes relevant to spermatogenesis. This is Rhox homeobox family member 2 from Homo sapiens (Human).